A 551-amino-acid chain; its full sequence is L-lactate permease (551 aa).

The next 12 membrane-spanning stretches (helical) occupy residues 13 to 33 (NIWL…FALI), 37 to 57 (LKGY…ALLF), 69 to 89 (VVYG…AAVF), 131 to 151 (GAAG…GLGF), 159 to 179 (LCLI…PILV), 194 to 214 (MVGR…MAIM), 244 to 264 (FIGP…CLTL), 306 to 326 (FLFL…ALFA), 366 to 386 (FDWF…SIVW), 405 to 425 (LALP…SNYS), 438 to 458 (TGSA…FLTG), and 530 to 550 (IFTC…TWMI).

This sequence belongs to the lactate permease family.

The protein resides in the cell inner membrane. The enzyme catalyses (S)-lactate(in) + H(+)(in) = (S)-lactate(out) + H(+)(out). It catalyses the reaction (R)-lactate(in) + H(+)(in) = (R)-lactate(out) + H(+)(out). The catalysed reaction is glycolate(in) + H(+)(in) = glycolate(out) + H(+)(out). Functionally, uptake of L-lactate across the membrane. Can also transport D-lactate and glycolate. Seems to be driven by a proton motive force. The polypeptide is L-lactate permease (lldP) (Salmonella typhimurium (strain LT2 / SGSC1412 / ATCC 700720)).